The following is a 455-amino-acid chain: UDP-N-acetylmuramoyl-tripeptide--D-alanyl-D-alanine ligase (455 aa).

107–113 (GSCGKTS) contacts ATP.

Belongs to the MurCDEF family. MurF subfamily.

It is found in the cytoplasm. The enzyme catalyses D-alanyl-D-alanine + UDP-N-acetyl-alpha-D-muramoyl-L-alanyl-gamma-D-glutamyl-meso-2,6-diaminopimelate + ATP = UDP-N-acetyl-alpha-D-muramoyl-L-alanyl-gamma-D-glutamyl-meso-2,6-diaminopimeloyl-D-alanyl-D-alanine + ADP + phosphate + H(+). It participates in cell wall biogenesis; peptidoglycan biosynthesis. Involved in cell wall formation. Catalyzes the final step in the synthesis of UDP-N-acetylmuramoyl-pentapeptide, the precursor of murein. In Buchnera aphidicola subsp. Acyrthosiphon pisum (strain APS) (Acyrthosiphon pisum symbiotic bacterium), this protein is UDP-N-acetylmuramoyl-tripeptide--D-alanyl-D-alanine ligase.